The chain runs to 252 residues: Nuclease C1 (252 aa).

The active-site Proton acceptor is the histidine 87. Asparagine 119 lines the Mg(2+) pocket.

The protein belongs to the DNA/RNA non-specific endonuclease family. The cofactor is Mg(2+). Mn(2+) serves as cofactor.

Its subcellular location is the secreted. In terms of biological role, this enzyme has both RNase and DNase activity. In Cunninghamella echinulata var. echinulata, this protein is Nuclease C1 (NUC1CE).